The following is a 209-amino-acid chain: 2,3-bisphosphoglycerate-dependent phosphoglycerate mutase (209 aa).

Substrate-binding positions include 8–15 (RHGQSEGN), 21–22 (TG), arginine 60, 87–90 (ERDY), lysine 98, 114–115 (RR), and 158–159 (GN). Catalysis depends on histidine 9, which acts as the Tele-phosphohistidine intermediate. Catalysis depends on glutamate 87, which acts as the Proton donor/acceptor.

The protein belongs to the phosphoglycerate mutase family. BPG-dependent PGAM subfamily. As to quaternary structure, homodimer.

It catalyses the reaction (2R)-2-phosphoglycerate = (2R)-3-phosphoglycerate. It functions in the pathway carbohydrate degradation; glycolysis; pyruvate from D-glyceraldehyde 3-phosphate: step 3/5. In terms of biological role, catalyzes the interconversion of 2-phosphoglycerate and 3-phosphoglycerate. This chain is 2,3-bisphosphoglycerate-dependent phosphoglycerate mutase, found in Rhizobium etli (strain ATCC 51251 / DSM 11541 / JCM 21823 / NBRC 15573 / CFN 42).